Here is a 100-residue protein sequence, read N- to C-terminus: Urease subunit gamma (100 aa).

It belongs to the urease gamma subunit family. As to quaternary structure, heterotrimer of UreA (gamma), UreB (beta) and UreC (alpha) subunits. Three heterotrimers associate to form the active enzyme.

It is found in the cytoplasm. The enzyme catalyses urea + 2 H2O + H(+) = hydrogencarbonate + 2 NH4(+). It participates in nitrogen metabolism; urea degradation; CO(2) and NH(3) from urea (urease route): step 1/1. This Prochlorococcus marinus (strain MIT 9303) protein is Urease subunit gamma.